A 128-amino-acid polypeptide reads, in one-letter code: Putative pre-16S rRNA nuclease (128 aa).

This sequence belongs to the YqgF nuclease family.

Its subcellular location is the cytoplasm. Its function is as follows. Could be a nuclease involved in processing of the 5'-end of pre-16S rRNA. The polypeptide is Putative pre-16S rRNA nuclease (Campylobacter lari (strain RM2100 / D67 / ATCC BAA-1060)).